The sequence spans 383 residues: Chitinase-3-like protein 1 (383 aa).

An N-terminal signal peptide occupies residues 1 to 21 (MGVKASQTGFVVLVLLQCCSA). Residues 22–383 (YKLVCYYTSW…NAIKDALAAT (362 aa)) enclose the GH18 domain. Cys26 and Cys51 form a disulfide bridge. Residue Asn60 is glycosylated (N-linked (GlcNAc...) asparagine). Residues 70 to 71 (EW), 97 to 100 (GGWN), Tyr141, 204 to 207 (MTYD), and Arg263 each bind chitin. Cys300 and Cys364 are oxidised to a cystine. The tract at residues 324 to 338 (QWVGYDDQESVKSKV) is important for AKT1 activation and IL8 production. Trp352 contacts chitin.

Belongs to the glycosyl hydrolase 18 family. As to quaternary structure, monomer. In terms of processing, glycosylated. In terms of tissue distribution, present in activated macrophages, articular chondrocytes, synovial cells as well as in liver. Very low or undetectable expression in non-inflammatory colon. Undetectable in muscle tissues, lung, pancreas, mononuclear cells, or fibroblasts.

The protein localises to the secreted. It is found in the extracellular space. Its subcellular location is the cytoplasm. The protein resides in the perinuclear region. It localises to the endoplasmic reticulum. In terms of biological role, carbohydrate-binding lectin with a preference for chitin. Has no chitinase activity. May play a role in tissue remodeling and in the capacity of cells to respond to and cope with changes in their environment. Plays a role in T-helper cell type 2 (Th2) inflammatory response and IL-13-induced inflammation, regulating allergen sensitization, inflammatory cell apoptosis, dendritic cell accumulation and M2 macrophage differentiation. Facilitates invasion of pathogenic enteric bacteria into colonic mucosa and lymphoid organs. Mediates activation of AKT1 signaling pathway and subsequent IL8 production in colonic epithelial cells. Regulates antibacterial responses in lung by contributing to macrophage bacterial killing, controlling bacterial dissemination and augmenting host tolerance. Also regulates hyperoxia-induced injury, inflammation and epithelial apoptosis in lung. The protein is Chitinase-3-like protein 1 (CHI3L1) of Homo sapiens (Human).